The primary structure comprises 158 residues: Transcription elongation factor GreA (158 aa).

The protein belongs to the GreA/GreB family.

In terms of biological role, necessary for efficient RNA polymerase transcription elongation past template-encoded arresting sites. The arresting sites in DNA have the property of trapping a certain fraction of elongating RNA polymerases that pass through, resulting in locked ternary complexes. Cleavage of the nascent transcript by cleavage factors such as GreA or GreB allows the resumption of elongation from the new 3'terminus. GreA releases sequences of 2 to 3 nucleotides. This Ruthia magnifica subsp. Calyptogena magnifica protein is Transcription elongation factor GreA.